The following is a 189-amino-acid chain: MELCHSNQLKIGLKIIYNNEPCIVVSNEFIKPGKGQAFFRVRLKNLLNKKLIDKTCKYSDCFKIANVIEITATYMFTDKKVWTFMDKKSFEQIFVEKNIIKNVLPWLLEQHDYIISLWNDQPISIVYSSNFIELIVVNTIPNARSGAINTYSKLALLNTGVTIKVPIFIQIGQIIKVDTRTSEYISKIS.

Lysine 34 is subject to N6-(3,6-diaminohexanoyl)-5-hydroxylysine.

This sequence belongs to the elongation factor P family. In terms of processing, may be beta-lysylated on the epsilon-amino group of Lys-34 by the combined action of EpmA and EpmB, and then hydroxylated on the C5 position of the same residue by EpmC (if this protein is present). Lysylation is critical for the stimulatory effect of EF-P on peptide-bond formation. The lysylation moiety may extend toward the peptidyltransferase center and stabilize the terminal 3-CCA end of the tRNA. Hydroxylation of the C5 position on Lys-34 may allow additional potential stabilizing hydrogen-bond interactions with the P-tRNA.

The protein resides in the cytoplasm. Its pathway is protein biosynthesis; polypeptide chain elongation. Its function is as follows. Involved in peptide bond synthesis. Alleviates ribosome stalling that occurs when 3 or more consecutive Pro residues or the sequence PPG is present in a protein, possibly by augmenting the peptidyl transferase activity of the ribosome. Modification of Lys-34 is required for alleviation. The chain is Elongation factor P from Buchnera aphidicola subsp. Baizongia pistaciae (strain Bp).